Here is a 161-residue protein sequence, read N- to C-terminus: 4-hydroxybenzoyl-CoA reductase subunit gamma (161 aa).

The 2Fe-2S ferredoxin-type domain maps to 3-79; the sequence is NILRLTLNGR…GKKVETVESL (77 aa). [2Fe-2S] cluster-binding residues include C41, C46, C49, C61, C100, C103, C135, and C137.

Heterohexamer of two alpha, two beta and two gamma subunits. The cofactor is [2Fe-2S] cluster.

The catalysed reaction is oxidized 2[4Fe-4S]-[ferredoxin] + benzoyl-CoA + H2O = 4-hydroxybenzoyl-CoA + reduced 2[4Fe-4S]-[ferredoxin] + 2 H(+). Inactivated by low concentrations of cyanide in vitro. In terms of biological role, component of a complex that catalyzes the reductive dehydroxylation of 4-hydroxybenzoyl-CoA to benzoyl-CoA. Reaction is not reversible. Is a key enzyme in the anaerobic degradation of phenolic compounds. In Thauera aromatica, this protein is 4-hydroxybenzoyl-CoA reductase subunit gamma (hcrC).